Consider the following 629-residue polypeptide: Embryonic polyadenylate-binding protein A (629 aa).

4 RRM domains span residues alanine 11–arginine 89, glycine 99–serine 175, threonine 191–lysine 268, and valine 294–arginine 370. The PABC domain occupies glutamine 539–alanine 616.

It belongs to the polyadenylate-binding protein type-1 family. In terms of assembly, interacts with dazl in an RNA-independent manner. The C-terminus can self-associate and also interact with the C-terminus of pabpc1, independently of RNA. RRM 1 and RRM 2 interact with both eif4g1 and paip1, and the C-terminus also interacts with paip1. Prior to oocyte maturation, found in a complex with dazl and pum2 proteins and spdy1 mRNA; pum2 dissociates from the complex during maturation. Interacts with the translation termination factor sup35/erf3. In terms of tissue distribution, expressed in adult testis, but at a reduced level compared to oocytes.

The protein resides in the cytoplasm. Its function is as follows. Binds and protects the poly(A) tail of mRNA with or without an AU-rich element (ARE) and prevents mRNA deadenylation. Stimulates the translation of mRNAs to which it is bound during early development. In Xenopus laevis (African clawed frog), this protein is Embryonic polyadenylate-binding protein A (epabp-a).